Consider the following 342-residue polypeptide: Galactose mutarotase (342 aa).

Serine 14 carries the phosphoserine modification. Beta-D-galactose-binding positions include 81 to 82 (NR) and histidine 107. Position 124 is a phosphoserine (serine 124). Residue histidine 176 is the Proton donor of the active site. Residues 176–178 (HSY), aspartate 243, glutamine 279, and glutamate 307 each bind beta-D-galactose. Catalysis depends on glutamate 307, which acts as the Proton acceptor.

It belongs to the aldose epimerase family. In terms of assembly, monomer.

Its subcellular location is the cytoplasm. The enzyme catalyses alpha-D-galactose = beta-D-galactose. It catalyses the reaction alpha-D-glucose = beta-D-glucose. It functions in the pathway carbohydrate metabolism; hexose metabolism. It participates in carbohydrate metabolism; galactose metabolism. Its function is as follows. Mutarotase that catalyzes the interconversion of beta-D-galactose and alpha-D-galactose during galactose metabolism. Beta-D-galactose is metabolized in the liver into glucose 1-phosphate, the primary metabolic fuel, by the action of four enzymes that constitute the Leloir pathway: GALM, GALK1 (galactokinase), GALT (galactose-1-phosphate uridylyltransferase) and GALE (UDP-galactose-4'-epimerase). Involved in the maintenance of the equilibrium between the beta- and alpha-anomers of galactose, therefore ensuring a sufficient supply of the alpha-anomer for GALK1. Also active on D-glucose although shows a preference for galactose over glucose. This is Galactose mutarotase (Galm) from Rattus norvegicus (Rat).